Reading from the N-terminus, the 346-residue chain is Inositol 2-dehydrogenase (346 aa).

Belongs to the Gfo/Idh/MocA family. In terms of assembly, homotetramer.

It catalyses the reaction myo-inositol + NAD(+) = scyllo-inosose + NADH + H(+). Involved in the oxidation of myo-inositol (MI) to 2-keto-myo-inositol (2KMI or 2-inosose). This chain is Inositol 2-dehydrogenase, found in Rhodococcus erythropolis (strain PR4 / NBRC 100887).